Here is a 243-residue protein sequence, read N- to C-terminus: 1-(5-phosphoribosyl)-5-[(5-phosphoribosylamino)methylideneamino] imidazole-4-carboxamide isomerase (243 aa).

Asp-8 functions as the Proton acceptor in the catalytic mechanism. Residue Asp-130 is the Proton donor of the active site.

It belongs to the HisA/HisF family.

It is found in the cytoplasm. It catalyses the reaction 1-(5-phospho-beta-D-ribosyl)-5-[(5-phospho-beta-D-ribosylamino)methylideneamino]imidazole-4-carboxamide = 5-[(5-phospho-1-deoxy-D-ribulos-1-ylimino)methylamino]-1-(5-phospho-beta-D-ribosyl)imidazole-4-carboxamide. It participates in amino-acid biosynthesis; L-histidine biosynthesis; L-histidine from 5-phospho-alpha-D-ribose 1-diphosphate: step 4/9. This chain is 1-(5-phosphoribosyl)-5-[(5-phosphoribosylamino)methylideneamino] imidazole-4-carboxamide isomerase, found in Acinetobacter baumannii (strain SDF).